The sequence spans 555 residues: Connector enhancer of kinase suppressor of ras 3 (555 aa).

An SAM domain is found at 7–72 (WSPKQVVDWT…LEAVDLLCAL (66 aa)). Residues 80 to 174 (NMKNLVLKLR…TAVQKDCLVA (95 aa)) form the CRIC domain. The region spanning 211-293 (EVHLPNVRPG…GVVLLLKKRP (83 aa)) is the PDZ domain. Disordered stretches follow at residues 308-333 (RWKPPLVQTSPPPTTTQSPESTMDAS), 348-391 (PPPA…LDQE), and 518-538 (PFQEEGPKKKSASSSAKASSG). Over residues 311 to 329 (PPLVQTSPPPTTTQSPEST) the composition is skewed to low complexity. Residues 325 to 546 (SPESTMDASL…SGEPSLLVSW (222 aa)) enclose the DUF1170 domain. 2 positions are modified to phosphoserine: serine 381 and serine 383.

It belongs to the CNKSR family. In terms of assembly, interacts with epithelial sodium channel ENaC. Interacts directly with SCNN1A (ENaC subunit alpha) and SCNN1B (ENaC subunit beta) C-terminal tails. Interacts with ENaC regulatory proteins NEDD4L, RAF1 and SGK1.

It is found in the cytoplasm. It localises to the apical cell membrane. Functionally, involved in transepithelial sodium transport. Regulates aldosterone-induced and epithelial sodium channel (ENaC)-mediated sodium transport through regulation of ENaC cell surface expression. Acts as a scaffold protein coordinating the assembly of an ENaC-regulatory complex (ERC). The polypeptide is Connector enhancer of kinase suppressor of ras 3 (Cnksr3) (Rattus norvegicus (Rat)).